A 225-amino-acid polypeptide reads, in one-letter code: Leucyl/phenylalanyl-tRNA--protein transferase (225 aa).

The protein belongs to the L/F-transferase family.

Its subcellular location is the cytoplasm. The catalysed reaction is N-terminal L-lysyl-[protein] + L-leucyl-tRNA(Leu) = N-terminal L-leucyl-L-lysyl-[protein] + tRNA(Leu) + H(+). It catalyses the reaction N-terminal L-arginyl-[protein] + L-leucyl-tRNA(Leu) = N-terminal L-leucyl-L-arginyl-[protein] + tRNA(Leu) + H(+). The enzyme catalyses L-phenylalanyl-tRNA(Phe) + an N-terminal L-alpha-aminoacyl-[protein] = an N-terminal L-phenylalanyl-L-alpha-aminoacyl-[protein] + tRNA(Phe). In terms of biological role, functions in the N-end rule pathway of protein degradation where it conjugates Leu, Phe and, less efficiently, Met from aminoacyl-tRNAs to the N-termini of proteins containing an N-terminal arginine or lysine. The polypeptide is Leucyl/phenylalanyl-tRNA--protein transferase (Nitrobacter hamburgensis (strain DSM 10229 / NCIMB 13809 / X14)).